The chain runs to 285 residues: NADPH-dependent 7-cyano-7-deazaguanine reductase (285 aa).

Position 91 to 93 (91 to 93) interacts with substrate; the sequence is IES. 93 to 94 contributes to the NADPH binding site; the sequence is SK. The active-site Thioimide intermediate is the Cys-192. Residue Asp-199 is the Proton donor of the active site. 231–232 is a binding site for substrate; it reads HE. NADPH is bound at residue 260–261; sequence RG.

Belongs to the GTP cyclohydrolase I family. QueF type 2 subfamily. As to quaternary structure, homodimer.

The protein resides in the cytoplasm. The catalysed reaction is 7-aminomethyl-7-carbaguanine + 2 NADP(+) = 7-cyano-7-deazaguanine + 2 NADPH + 3 H(+). Its pathway is tRNA modification; tRNA-queuosine biosynthesis. Catalyzes the NADPH-dependent reduction of 7-cyano-7-deazaguanine (preQ0) to 7-aminomethyl-7-deazaguanine (preQ1). The sequence is that of NADPH-dependent 7-cyano-7-deazaguanine reductase from Psychromonas ingrahamii (strain DSM 17664 / CCUG 51855 / 37).